The primary structure comprises 264 residues: 4-hydroxy-tetrahydrodipicolinate reductase (264 aa).

10 to 15 (GCLGRQ) contacts NAD(+). Arg37 contributes to the NADP(+) binding site. Residues 99–101 (GTT) and 121–124 (SANL) contribute to the NAD(+) site. The Proton donor/acceptor role is filled by His153. Residue His154 participates in (S)-2,3,4,5-tetrahydrodipicolinate binding. The active-site Proton donor is Lys157. 163–164 (GT) contacts (S)-2,3,4,5-tetrahydrodipicolinate.

This sequence belongs to the DapB family.

The protein resides in the cytoplasm. The enzyme catalyses (S)-2,3,4,5-tetrahydrodipicolinate + NAD(+) + H2O = (2S,4S)-4-hydroxy-2,3,4,5-tetrahydrodipicolinate + NADH + H(+). The catalysed reaction is (S)-2,3,4,5-tetrahydrodipicolinate + NADP(+) + H2O = (2S,4S)-4-hydroxy-2,3,4,5-tetrahydrodipicolinate + NADPH + H(+). Its pathway is amino-acid biosynthesis; L-lysine biosynthesis via DAP pathway; (S)-tetrahydrodipicolinate from L-aspartate: step 4/4. In terms of biological role, catalyzes the conversion of 4-hydroxy-tetrahydrodipicolinate (HTPA) to tetrahydrodipicolinate. This chain is 4-hydroxy-tetrahydrodipicolinate reductase, found in Ehrlichia ruminantium (strain Gardel).